The primary structure comprises 234 residues: L-cystine transport system permease protein TcyB (234 aa).

The next 5 membrane-spanning stretches (helical) occupy residues 8–28, 36–56, 78–98, 100–120, and 199–219; these read ALTL…WPIL, IPLT…TALA, TPLL…NVTL, PFPS…SEII, and ILVI…LLSL. The region spanning 32–221 is the ABC transmembrane type-1 domain; that stretch reads IYYTIPLTIL…IICFLLSLVQ (190 aa).

The protein belongs to the binding-protein-dependent transport system permease family. The complex is composed of two ATP-binding proteins (TcyC), two transmembrane proteins (TcyB) and a solute-binding protein (TcyA).

It is found in the cell membrane. Part of the ABC transporter complex TcyABC involved in L-cystine import. Probably responsible for the translocation of the substrate across the membrane. This chain is L-cystine transport system permease protein TcyB (tcyB), found in Bacillus subtilis (strain 168).